The primary structure comprises 428 residues: Gamma-glutamyl phosphate reductase (428 aa).

It belongs to the gamma-glutamyl phosphate reductase family.

The protein resides in the cytoplasm. The enzyme catalyses L-glutamate 5-semialdehyde + phosphate + NADP(+) = L-glutamyl 5-phosphate + NADPH + H(+). It functions in the pathway amino-acid biosynthesis; L-proline biosynthesis; L-glutamate 5-semialdehyde from L-glutamate: step 2/2. In terms of biological role, catalyzes the NADPH-dependent reduction of L-glutamate 5-phosphate into L-glutamate 5-semialdehyde and phosphate. The product spontaneously undergoes cyclization to form 1-pyrroline-5-carboxylate. The polypeptide is Gamma-glutamyl phosphate reductase (Zymomonas mobilis subsp. mobilis (strain ATCC 31821 / ZM4 / CP4)).